The primary structure comprises 211 residues: Transcriptional regulatory protein RcsA (211 aa).

Positions 135-200 (SEVHPFTLSQ…VIYHVVRLTD (66 aa)) constitute an HTH luxR-type domain. A DNA-binding region (H-T-H motif) is located at residues 159 to 178 (TIQISDKMQIKAKTVSSHKG).

This sequence belongs to the RcsA family.

Functionally, component of the Rcs signaling system, which controls transcription of numerous genes. Binds to DNA to regulate expression of genes. In Erwinia amylovora (Fire blight bacteria), this protein is Transcriptional regulatory protein RcsA.